Consider the following 526-residue polypeptide: Outer capsid protein VP5 (526 aa).

The segment at 1 to 42 is involved in membrane permeabilization; the sequence is MGKVIRSLNRFGKKVGNALTSNTAKKIYSTIGKAADEFLESE.

This sequence belongs to the orbivirus VP5 family.

Its subcellular location is the virion. VP5 protein is one of the two proteins (with VP2) which constitute the virus particle outer capsid. Acts as a membrane permeabilization protein that mediates release of viral particles from endosomal compartments into the cytoplasm. Permeabilization activity is probably negatively regulated by VP2 and is triggered by endosomal degradation of VP2 and exposure to low pH. The sequence is that of Outer capsid protein VP5 (Segment-6) from Bluetongue virus 1 (isolate South Africa) (BTV 1).